The following is a 498-amino-acid chain: Glycerol kinase (498 aa).

Thr12 is a binding site for ADP. Residues Thr12, Thr13, and Ser14 each contribute to the ATP site. Thr12 lines the sn-glycerol 3-phosphate pocket. Residue Arg16 coordinates ADP. Sn-glycerol 3-phosphate-binding residues include Arg82, Glu83, Tyr134, and Asp243. Positions 82, 83, 134, 243, and 244 each coordinate glycerol. ADP is bound by residues Thr265 and Gly308. Thr265, Gly308, Gln312, and Gly409 together coordinate ATP. Positions 409 and 413 each coordinate ADP.

The protein belongs to the FGGY kinase family. In terms of assembly, homotetramer and homodimer (in equilibrium).

It catalyses the reaction glycerol + ATP = sn-glycerol 3-phosphate + ADP + H(+). The protein operates within polyol metabolism; glycerol degradation via glycerol kinase pathway; sn-glycerol 3-phosphate from glycerol: step 1/1. Activated by phosphorylation and inhibited by fructose 1,6-bisphosphate (FBP). In terms of biological role, key enzyme in the regulation of glycerol uptake and metabolism. Catalyzes the phosphorylation of glycerol to yield sn-glycerol 3-phosphate. The chain is Glycerol kinase from Clostridium botulinum (strain Loch Maree / Type A3).